The following is a 348-amino-acid chain: Ferredoxin--NADP reductase (348 aa).

FAD contacts are provided by Thr25, Glu44, Gln52, Tyr57, Val97, Phe132, Asp298, and Ser339.

The protein belongs to the ferredoxin--NADP reductase type 2 family. Homodimer. FAD is required as a cofactor.

The enzyme catalyses 2 reduced [2Fe-2S]-[ferredoxin] + NADP(+) + H(+) = 2 oxidized [2Fe-2S]-[ferredoxin] + NADPH. The chain is Ferredoxin--NADP reductase from Chlorobium phaeobacteroides (strain BS1).